Here is a 247-residue protein sequence, read N- to C-terminus: Carboxy-S-adenosyl-L-methionine synthase (247 aa).

S-adenosyl-L-methionine-binding positions include Tyr-40, 65 to 67, 90 to 91, 122 to 123, Asn-137, and Arg-204; these read GSS, DN, and DI.

This sequence belongs to the class I-like SAM-binding methyltransferase superfamily. Cx-SAM synthase family. In terms of assembly, homodimer.

The catalysed reaction is prephenate + S-adenosyl-L-methionine = carboxy-S-adenosyl-L-methionine + 3-phenylpyruvate + H2O. Functionally, catalyzes the conversion of S-adenosyl-L-methionine (SAM) to carboxy-S-adenosyl-L-methionine (Cx-SAM). This Pseudomonas fluorescens (strain SBW25) protein is Carboxy-S-adenosyl-L-methionine synthase.